We begin with the raw amino-acid sequence, 125 residues long: uncharacterized protein (125 aa).

Residues 100 to 120 traverse the membrane as a helical segment; that stretch reads YFKVAFALAVLTPLAIWIFYI.

The protein localises to the membrane. This is an uncharacterized protein from Saccharomyces cerevisiae (strain ATCC 204508 / S288c) (Baker's yeast).